The chain runs to 407 residues: MEIILGVAMFTGIVMVLVLLILFAKSRLVNTGDIAVEVNGDLDKSFTAPAGDKLLNMLSSQGIFVSSACGGGGSCGQCRVVIKEGGGDILPTELSHINKREAKEGCRLACQVNVKQNLKIELPEEIFGVKKWECEVISNDNKATFIKELKLKIPDGEDVPFRAGGFIQIEAPAHDISYADFDVPDEYRGDWDKFNLFRYRSVVNETTVRAYSMANYPDEKGIIMLNVRIATPPPRDPDVPPGIMSSYIWSLKAGDKVTISGPFGEFFAKDTDAEMIFIGGGAGMAPMRSHIFDQLNRLKSKRKITFWYGARSLREMFYEEDFNQLQAENENFTWHVALSDPQPEDNWTGYTGFIHNVLLENYLRNHPAPEDCEFYMCGPPMMNAAVIKMLKDLGVEDENIMLDDFGG.

A helical transmembrane segment spans residues Ile3–Phe23. The 2Fe-2S ferredoxin-type domain maps to Gly32 to Ile126. [2Fe-2S] cluster is bound by residues Cys69, Cys75, Cys78, and Cys110. In terms of domain architecture, FAD-binding FR-type spans Val129 to Lys269.

Belongs to the NqrF family. As to quaternary structure, composed of six subunits; NqrA, NqrB, NqrC, NqrD, NqrE and NqrF. [2Fe-2S] cluster is required as a cofactor. The cofactor is FAD.

Its subcellular location is the cell inner membrane. The catalysed reaction is a ubiquinone + n Na(+)(in) + NADH + H(+) = a ubiquinol + n Na(+)(out) + NAD(+). In terms of biological role, NQR complex catalyzes the reduction of ubiquinone-1 to ubiquinol by two successive reactions, coupled with the transport of Na(+) ions from the cytoplasm to the periplasm. The first step is catalyzed by NqrF, which accepts electrons from NADH and reduces ubiquinone-1 to ubisemiquinone by a one-electron transfer pathway. The polypeptide is Na(+)-translocating NADH-quinone reductase subunit F (Serratia proteamaculans (strain 568)).